A 353-amino-acid polypeptide reads, in one-letter code: Chemerin-like receptor 2 (353 aa).

The Extracellular segment spans residues 1 to 41 (MEVSKEMLFEELDNYSYALDYYSQESDPEEKVYLGLVHWIS). Residue Asn-14 is glycosylated (N-linked (GlcNAc...) asparagine). The chain crosses the membrane as a helical span at residues 42-62 (LFLYALAFVLGIPGNAIVIWL). Topologically, residues 63–73 (MGFKWKKTVTT) are cytoplasmic. A helical transmembrane segment spans residues 74 to 94 (LWFLNLAIADFIFVLFLPLYI). The Extracellular segment spans residues 95–112 (SYVALSFHWPFGLWLCKV). Cys-110 and Cys-187 are disulfide-bonded. A helical membrane pass occupies residues 113 to 133 (NSFIAQLNMFSSVFFLTVISL). Over 134–154 (DRYIHLLHPGLSHRHRTLKSS) the chain is Cytoplasmic. A helical membrane pass occupies residues 155–175 (LVVVILVWLLASLLGGPTLYF). Residues 176–210 (RDTMEVNNHIICYNNFQEHELTLMRHHVLTWVKFL) are Extracellular-facing. The helical transmembrane segment at 211–231 (FGYLFPLLTMSSCYLCLIFKM) threads the bilayer. At 232 to 247 (KKRNILISRKHLWMIL) the chain is on the cytoplasmic side. Residues 248 to 268 (SVVIAFLVCWTPYHLFSIWEL) traverse the membrane as a helical segment. The Extracellular portion of the chain corresponds to 269-286 (SIHHNSSFQNVLQGGIPL). Residues 287-307 (STGLAFLNSCLNPILYVLISK) form a helical membrane-spanning segment. Over 308–353 (TFQARFRASVAEVLKRSLWEASCSGTVSEQLRSAETKSLSLLETAQ) the chain is Cytoplasmic.

This sequence belongs to the chemokine-like receptor (CMKLR) family. As to expression, high expressed in white adipose tissue and skeletal muscle. Expressed in hippocampus and cortex.

The protein resides in the cell membrane. Its function is as follows. Receptor for chemoattractant adipokine chemerin/RARRES2 suggesting a role for this receptor in the regulation of inflammation and energy homesotasis. Signals mainly via beta-arrestin pathway. Binding of RARRES2 activates weakly G proteins, calcium mobilization and MAPK1/MAPK3 (ERK1/2) phosphorylation too. Acts also as a receptor for TAFA1, mediates its effects on neuronal stem-cell proliferation and differentiation via the activation of ROCK/ERK and ROCK/STAT3 signaling pathway. This is Chemerin-like receptor 2 (Cmklr2) from Mus musculus (Mouse).